A 151-amino-acid chain; its full sequence is 3-hydroxyacyl-[acyl-carrier-protein] dehydratase FabZ (151 aa).

H52 is a catalytic residue.

Belongs to the thioester dehydratase family. FabZ subfamily.

It is found in the cytoplasm. The catalysed reaction is a (3R)-hydroxyacyl-[ACP] = a (2E)-enoyl-[ACP] + H2O. Functionally, involved in unsaturated fatty acids biosynthesis. Catalyzes the dehydration of short chain beta-hydroxyacyl-ACPs and long chain saturated and unsaturated beta-hydroxyacyl-ACPs. The polypeptide is 3-hydroxyacyl-[acyl-carrier-protein] dehydratase FabZ (fabZ1) (Lactococcus lactis subsp. lactis (strain IL1403) (Streptococcus lactis)).